The sequence spans 443 residues: Glutamate-1-semialdehyde 2,1-aminomutase (443 aa).

The span at 1-16 (MSVNADSQHSNNSSHQ) shows a compositional bias: low complexity. Positions 1–22 (MSVNADSQHSNNSSHQASEKAF) are disordered. Position 277 is an N6-(pyridoxal phosphate)lysine (Lys277).

It belongs to the class-III pyridoxal-phosphate-dependent aminotransferase family. HemL subfamily. As to quaternary structure, homodimer. Pyridoxal 5'-phosphate serves as cofactor.

The protein resides in the cytoplasm. The enzyme catalyses (S)-4-amino-5-oxopentanoate = 5-aminolevulinate. It participates in porphyrin-containing compound metabolism; protoporphyrin-IX biosynthesis; 5-aminolevulinate from L-glutamyl-tRNA(Glu): step 2/2. The protein is Glutamate-1-semialdehyde 2,1-aminomutase of Corynebacterium jeikeium (strain K411).